A 491-amino-acid polypeptide reads, in one-letter code: Bifunctional protein GlmU (491 aa).

A pyrophosphorylase region spans residues 1 to 238 (MTTQPAVPAA…EWEIRGVNDR (238 aa)). UDP-N-acetyl-alpha-D-glucosamine-binding positions include 14-17 (LAAG), Lys28, Gln81, 86-87 (GT), 110-112 (YGD), Gly149, Glu163, Asn178, and Asn236. Position 112 (Asp112) interacts with Mg(2+). Position 236 (Asn236) interacts with Mg(2+). Residues 239–259 (AQLADLAAEANRRTLRRWMLA) are linker. Positions 260–491 (GVTIADPATT…TASTDREIQP (232 aa)) are N-acetyltransferase. The UDP-N-acetyl-alpha-D-glucosamine site is built by Arg341 and Lys359. His371 serves as the catalytic Proton acceptor. UDP-N-acetyl-alpha-D-glucosamine is bound by residues Tyr374 and Asn385. Residues Ala388, 394–395 (NY), Ser413, and Ala431 contribute to the acetyl-CoA site. The tract at residues 460-491 (AKRPGTPAAEAAQRANDESTGTTASTDREIQP) is disordered.

This sequence in the N-terminal section; belongs to the N-acetylglucosamine-1-phosphate uridyltransferase family. In the C-terminal section; belongs to the transferase hexapeptide repeat family. In terms of assembly, homotrimer. It depends on Mg(2+) as a cofactor.

It is found in the cytoplasm. It carries out the reaction alpha-D-glucosamine 1-phosphate + acetyl-CoA = N-acetyl-alpha-D-glucosamine 1-phosphate + CoA + H(+). It catalyses the reaction N-acetyl-alpha-D-glucosamine 1-phosphate + UTP + H(+) = UDP-N-acetyl-alpha-D-glucosamine + diphosphate. Its pathway is nucleotide-sugar biosynthesis; UDP-N-acetyl-alpha-D-glucosamine biosynthesis; N-acetyl-alpha-D-glucosamine 1-phosphate from alpha-D-glucosamine 6-phosphate (route II): step 2/2. It functions in the pathway nucleotide-sugar biosynthesis; UDP-N-acetyl-alpha-D-glucosamine biosynthesis; UDP-N-acetyl-alpha-D-glucosamine from N-acetyl-alpha-D-glucosamine 1-phosphate: step 1/1. The protein operates within bacterial outer membrane biogenesis; LPS lipid A biosynthesis. Catalyzes the last two sequential reactions in the de novo biosynthetic pathway for UDP-N-acetylglucosamine (UDP-GlcNAc). The C-terminal domain catalyzes the transfer of acetyl group from acetyl coenzyme A to glucosamine-1-phosphate (GlcN-1-P) to produce N-acetylglucosamine-1-phosphate (GlcNAc-1-P), which is converted into UDP-GlcNAc by the transfer of uridine 5-monophosphate (from uridine 5-triphosphate), a reaction catalyzed by the N-terminal domain. The polypeptide is Bifunctional protein GlmU (Kineococcus radiotolerans (strain ATCC BAA-149 / DSM 14245 / SRS30216)).